Consider the following 467-residue polypeptide: MTNWLQKRVRLSPKETALVFEGKEETFEEISEAVERLAGKLFALGIRKDEMIALLGKNDRMTFLLIHALQQLGAVTLFLNNRLTKKEIAYQLANAEVKQVIVADTFEDKVGAGISYSELAETDYKEPELLETWDLSRTASIMYTSGTTGKPKGVIQTYENHWWSAVASVLNLGLTEKDSWLCAVPIFHISGLSIMMRSVIYGIPVYLEEHFDEEKITQLLESGKVSTISVVTSMLERLLKIHGGSYHPNVRTILLGGGPASKTVLEICKQRDIPLVQSFGMTETASQIVTLPPKDALNKIGSSGKALFPAEVKIADDGEILLKGPSITPGYLHNKKATEASFVDGWFKTGDIGYLDEEGFLFVVERRSDLIISGGENIYPTEIEHVIGEYVAVKEVAVIGQPDDKWGSVPVAFIVAEETFDEDELQLICQTNLASYKIPKQIIIVEKLPKTASGKIQRNKLKERHSK.

This sequence belongs to the ATP-dependent AMP-binding enzyme family. MenE subfamily.

The catalysed reaction is 2-succinylbenzoate + ATP + CoA = 2-succinylbenzoyl-CoA + AMP + diphosphate. Its pathway is quinol/quinone metabolism; 1,4-dihydroxy-2-naphthoate biosynthesis; 1,4-dihydroxy-2-naphthoate from chorismate: step 5/7. The protein operates within quinol/quinone metabolism; menaquinone biosynthesis. Functionally, converts 2-succinylbenzoate (OSB) to 2-succinylbenzoyl-CoA (OSB-CoA). The sequence is that of 2-succinylbenzoate--CoA ligase from Listeria monocytogenes serovar 1/2a (strain ATCC BAA-679 / EGD-e).